Here is a 231-residue protein sequence, read N- to C-terminus: NADH-ubiquinone oxidoreductase chain 4 (231 aa).

A run of 7 helical transmembrane segments spans residues 1–21 (PIAG…YGII), 34–54 (LFLP…LTCL), 63–85 (IAYS…TPWG), 89–111 (AMAL…NTTY), 128–148 (ILPM…AIPP), 156–176 (LLIM…LGLS), and 211–231 (LLIA…ELVI).

Belongs to the complex I subunit 4 family.

It localises to the mitochondrion membrane. The enzyme catalyses a ubiquinone + NADH + 5 H(+)(in) = a ubiquinol + NAD(+) + 4 H(+)(out). Functionally, core subunit of the mitochondrial membrane respiratory chain NADH dehydrogenase (Complex I) that is believed to belong to the minimal assembly required for catalysis. Complex I functions in the transfer of electrons from NADH to the respiratory chain. The immediate electron acceptor for the enzyme is believed to be ubiquinone. The chain is NADH-ubiquinone oxidoreductase chain 4 (MT-ND4) from Crotalus adamanteus (Eastern diamondback rattlesnake).